Consider the following 408-residue polypeptide: UPF0761 membrane protein azo3165 (408 aa).

Transmembrane regions (helical) follow at residues 29 to 49 (LAFT…GVFG), 92 to 112 (LTLI…ATIE), 131 to 151 (ITVS…SVVA), 172 to 192 (IAAA…LYYA), 197 to 217 (PVRL…FLLM), 220 to 240 (GLGL…TFAA), and 241 to 261 (LPIF…GALI).

Belongs to the UPF0761 family.

It localises to the cell inner membrane. The sequence is that of UPF0761 membrane protein azo3165 from Azoarcus sp. (strain BH72).